Here is a 106-residue protein sequence, read N- to C-terminus: Iron-sulfur cluster assembly protein CyaY (106 aa).

It belongs to the frataxin family.

Involved in iron-sulfur (Fe-S) cluster assembly. May act as a regulator of Fe-S biogenesis. The sequence is that of Iron-sulfur cluster assembly protein CyaY from Escherichia coli (strain SMS-3-5 / SECEC).